Reading from the N-terminus, the 706-residue chain is Protein argonaute (706 aa).

The N-terminal domain stretch occupies residues 1–108; that stretch reads MGKEALLNLY…ELFRDFLTKT (108 aa). Residues 109–165 are linker L1; the sequence is KVKDKFISDFYKKFRDKITVQGKNRKIALIPEVNEKVLKSEEGYFLLHLDLKFRIQP. In terms of domain architecture, PAZ spans 168 to 259; the sequence is TLQTLLERND…YPATILKPVL (92 aa). The linker L2 stretch occupies residues 263-334; that stretch reads NLEDEERNEV…AKGKNTKVIT (72 aa). The interval 335–448 is mid domain; it reads NLRKFLELCR…YDFVKRELLK (114 aa). The region spanning 419 to 694 is the Piwi domain; sequence LVIVFLEEYP…ITKLMLRGIE (276 aa). Residues 449–706 are PIWI domain; sequence KMIPSQVILN…KKEGDIMYWL (258 aa). Residues aspartate 502, glutamate 541, and aspartate 571 contribute to the active site. Position 502 (aspartate 502) interacts with Mn(2+). Position 571 (aspartate 571) interacts with Mn(2+). The PIWI box stretch occupies residues 612-650; it reads FIKGYFYKLSEDSVILATYNQVYEGTHQPIKVRKVYGEL. Residue aspartate 683 is part of the active site. Residue aspartate 683 coordinates Mn(2+).

Belongs to the argonaute family. Long pAgo subfamily. It depends on Mg(2+) as a cofactor.

Functionally, a DNA-guided RNA endonuclease. Uses short ssDNA sequences as guides (gDNA) to bind complementary target strands, resulting in cleavage of the target RNA. The cleavage site is 10 nucleotides downstream of the residue base paired with the 5'-end of the gDNA. Binds ssDNA better than ssRNA, binds dsDNA and DNA-RNA hybrids but does not bind dsRNA. A 2 nucleotide 3'-overhang (possibly on the guide strand) may help load nucleic acids into the complex. This is Protein argonaute from Aquifex aeolicus (strain VF5).